The chain runs to 180 residues: Probable chorismate pyruvate-lyase (180 aa).

3 residues coordinate substrate: Arg82, Leu120, and Glu165.

Belongs to the UbiC family.

It localises to the cytoplasm. It carries out the reaction chorismate = 4-hydroxybenzoate + pyruvate. It functions in the pathway cofactor biosynthesis; ubiquinone biosynthesis. Its function is as follows. Removes the pyruvyl group from chorismate, with concomitant aromatization of the ring, to provide 4-hydroxybenzoate (4HB) for the ubiquinone pathway. The polypeptide is Probable chorismate pyruvate-lyase (Photobacterium profundum (strain SS9)).